Reading from the N-terminus, the 269-residue chain is Cell wall protein TIR3 (269 aa).

A signal peptide spans 1–22 (MSFTKIAALLAVAAASTQLVSA). Residues 128-242 (SGSESATASS…TNSSSSATSK (115 aa)) are disordered. Residue Asn234 is glycosylated (N-linked (GlcNAc...) asparagine). Gly245 is lipidated: GPI-anchor amidated glycine. The propeptide at 246–269 (AAMDMGFFSAGVGAAIAGAAAMLL) is removed in mature form.

This sequence belongs to the SRP1/TIP1 family. Extensively O-glycosylated. Post-translationally, the GPI-anchor is attached to the protein in the endoplasmic reticulum and serves to target the protein to the cell surface. There, the glucosamine-inositol phospholipid moiety is cleaved off and the GPI-modified mannoprotein is covalently attached via its lipidless GPI glycan remnant to the 1,6-beta-glucan of the outer cell wall layer.

It localises to the secreted. Its subcellular location is the cell wall. It is found in the membrane. In terms of biological role, component of the cell wall. Required for anaerobic growth. The protein is Cell wall protein TIR3 (TIR3) of Saccharomyces cerevisiae (strain ATCC 204508 / S288c) (Baker's yeast).